The chain runs to 636 residues: Polyadenylate-binding protein 1 (636 aa).

N-acetylmethionine is present on M1. RRM domains lie at 11–89, 99–175, 191–268, and 294–370; these read ASLY…WSQR, GNIF…RFKS, TNVY…RAQK, and VNLY…LAQR. The CSDE1-binding stretch occupies residues 166–289; the sequence is RKVFVGRFKS…FEQMKQDRIT (124 aa). K299 is modified (N6-methyllysine). The residue at position 315 (S315) is a Phosphoserine. T319 bears the Phosphothreonine mark. R385, R419, R432, and R436 each carry omega-N-methylarginine. 2 positions are modified to omega-N-methylated arginine; by CARM1: R455 and R460. R475 and R481 each carry omega-N-methylarginine. R493 is subject to Asymmetric dimethylarginine; alternate. Dimethylated arginine; alternate is present on R493. R493 carries the omega-N-methylarginine; alternate modification. R506 bears the Omega-N-methylarginine mark. The residue at position 512 (K512) is an N6-acetyllysine. Residue R518 is modified to Omega-N-methylarginine. Positions 542-619 constitute a PABC domain; sequence QEPLTASMLA…AVAVLQAHQA (78 aa).

It belongs to the polyadenylate-binding protein type-1 family. In terms of assembly, may form homodimers. Component of a multisubunit autoregulatory ribonucleoprotein complex (ARC), at least composed of IGF2BP1, PABPC1 and CSDE1. Directly interacts with IGF2BP1. Part of a complex associated with the FOS mCRD domain and consisting of HNRPD, SYNCRIP, PAIP1 and CSDE1/UNR. Interacts with PAIP1 and PAIP2 (via the PABPC1-interacting motifs PAM1 and PAM2). Interacts with PAIP1 with a 1:1 stoichiometry and with PAIP2 with a 1:2 stoichiometry. The interaction with CSDE1 is direct and RNA-independent. Found in a mRNP complex with YBX2. Interacts with TENT2/GLD2. Identified in the spliceosome C complex. Identified in a mRNP complex, at least composed of DHX9, DDX3X, ELAVL1, HNRNPU, IGF2BP1, ILF3, PABPC1, PCBP2, PTBP2, STAU1, STAU2, SYNCRIP and YBX1. The interaction with DDX3X is direct and RNA-independent. This interaction increases in stressed cells and decreases during cell recovery. Identified in a IGF2BP1-dependent mRNP granule complex containing untranslated mRNAs. Interacts with NXF1/TAP. Interacts with PIWIL1. Interacts with AGO1, AGO2, GSPT1 and GSPT2. Interacts with LARP4B. Interacts (via the second and third RRM domains and the C-terminus) with PAIP2B (via central acidic portion and C-terminus). Forms a complex with LARP1 and SHFL. Interacts with LARP4. Interacts with ZFC3H1 in a RNase-sensitive manner. Interacts with TRIM71 (via NHL repeats) in an RNA-dependent manner. Interacts with TENT5C; the interaction has no effect on TENT5C poly(A) polymerase function. Interacts with G3BP1 and G3BP2. Interacts with ENDOV; the interaction is RNA-dependent and stimulates ENDOV activity. Interacts with UPF1; the interaction is RNA-dependent. Interacts with IGF2BP2 and IGF2BP3. May interact with SETX. Interacts with RBM46. Interacts with PAN3. In terms of processing, phosphorylated by MAPKAPK2. Post-translationally, methylated by CARM1. Arg-493 is dimethylated, probably to asymmetric dimethylarginine.

It is found in the cytoplasm. The protein resides in the stress granule. Its subcellular location is the nucleus. The protein localises to the cell projection. It localises to the lamellipodium. In terms of biological role, binds the poly(A) tail of mRNA, including that of its own transcript, and regulates processes of mRNA metabolism such as pre-mRNA splicing and mRNA stability. Its function in translational initiation regulation can either be enhanced by PAIP1 or repressed by PAIP2. Can probably bind to cytoplasmic RNA sequences other than poly(A) in vivo. Binds to N6-methyladenosine (m6A)-containing mRNAs and contributes to MYC stability by binding to m6A-containing MYC mRNAs. Involved in translationally coupled mRNA turnover. Implicated with other RNA-binding proteins in the cytoplasmic deadenylation/translational and decay interplay of the FOS mRNA mediated by the major coding-region determinant of instability (mCRD) domain. Involved in regulation of nonsense-mediated decay (NMD) of mRNAs containing premature stop codons; for the recognition of premature termination codons (PTC) and initiation of NMD a competitive interaction between UPF1 and PABPC1 with the ribosome-bound release factors is proposed. By binding to long poly(A) tails, may protect them from uridylation by ZCCHC6/ZCCHC11 and hence contribute to mRNA stability. The protein is Polyadenylate-binding protein 1 (PABPC1) of Bos taurus (Bovine).